The chain runs to 86 residues: Putative membrane protein insertion efficiency factor (86 aa).

The protein belongs to the UPF0161 family.

Its subcellular location is the cell inner membrane. Could be involved in insertion of integral membrane proteins into the membrane. The chain is Putative membrane protein insertion efficiency factor from Oleidesulfovibrio alaskensis (strain ATCC BAA-1058 / DSM 17464 / G20) (Desulfovibrio alaskensis).